Reading from the N-terminus, the 193-residue chain is Recombination protein RecR (193 aa).

A C4-type zinc finger spans residues 61–76 (CTSCNALSESEVCEIC). The 87-residue stretch at 84 to 170 (SQLCMVLHPR…TFTKIAQGVP (87 aa)) folds into the Toprim domain.

This sequence belongs to the RecR family.

Functionally, may play a role in DNA repair. It seems to be involved in an RecBC-independent recombinational process of DNA repair. It may act with RecF and RecO. This Helicobacter pylori (strain HPAG1) protein is Recombination protein RecR.